We begin with the raw amino-acid sequence, 120 residues long: MFVLSGYEYLLVFLIVCSLLPILALGASALLAPKRRGSLRRSTYESGMEPFGQAWIQFNIRYYMFALVFVIFDVETVFLYPWAVAFHRLGLLAFVEALIFIAILVVGLVYAWRKGALEWS.

3 helical membrane-spanning segments follow: residues 10 to 30 (LLVF…ASAL), 64 to 84 (MFAL…PWAV), and 89 to 109 (LGLL…VGLV).

The protein belongs to the complex I subunit 3 family. In terms of assembly, NDH-1 can be composed of about 15 different subunits; different subcomplexes with different compositions have been identified which probably have different functions.

The protein localises to the cellular thylakoid membrane. It catalyses the reaction a plastoquinone + NADH + (n+1) H(+)(in) = a plastoquinol + NAD(+) + n H(+)(out). The enzyme catalyses a plastoquinone + NADPH + (n+1) H(+)(in) = a plastoquinol + NADP(+) + n H(+)(out). Its function is as follows. NDH-1 shuttles electrons from an unknown electron donor, via FMN and iron-sulfur (Fe-S) centers, to quinones in the respiratory and/or the photosynthetic chain. The immediate electron acceptor for the enzyme in this species is believed to be plastoquinone. Couples the redox reaction to proton translocation, and thus conserves the redox energy in a proton gradient. Cyanobacterial NDH-1 also plays a role in inorganic carbon-concentration. The polypeptide is NAD(P)H-quinone oxidoreductase subunit 3 (Synechococcus sp. (strain JA-2-3B'a(2-13)) (Cyanobacteria bacterium Yellowstone B-Prime)).